A 786-amino-acid polypeptide reads, in one-letter code: Myosin light chain kinase 3 (786 aa).

Ser-155 carries the post-translational modification Phosphoserine. Disordered stretches follow at residues 233–258 (EALD…SEDT), 279–315 (RMSQ…IHSD), and 333–443 (ELFE…GRRV). Over residues 279–293 (RMSQSAGEGTSSSKP) the composition is skewed to polar residues. Phosphoserine is present on residues Ser-341 and Ser-422. Residues 482–737 (VSQHEVLGGG…ATQCLKHEWL (256 aa)) form the Protein kinase domain. Residues 488–496 (LGGGRFGQV) and Lys-511 each bind ATP. Asp-603 serves as the catalytic Proton acceptor.

This sequence belongs to the protein kinase superfamily. CAMK Ser/Thr protein kinase family. Mg(2+) serves as cofactor. Post-translationally, phosphorylated on serine residues. As to expression, expressed in cardiomyocytes (at protein level). Up-regulated in heart after experimental myocardial infarction at the mRNA level.

The protein localises to the cytoplasm. The enzyme catalyses L-seryl-[myosin light chain] + ATP = O-phospho-L-seryl-[myosin light chain] + ADP + H(+). It catalyses the reaction L-threonyl-[myosin light chain] + ATP = O-phospho-L-threonyl-[myosin light chain] + ADP + H(+). In terms of biological role, calmodulin-dependent kinase that phosphorylates MYL2 in vitro. Promotes sarcomere formation in cardiomyocytes. Increases cardiomyocyte contractility. This is Myosin light chain kinase 3 (Mylk3) from Rattus norvegicus (Rat).